Here is a 227-residue protein sequence, read N- to C-terminus: MKFVAFERAKQGTGASRRLRITGRTPGIVYGGTGEPSLIELDHNALWHAIKKEAFHASVLEMEMGGKTEKVLLRDLQMHPFKQQVLHIDFQRVDARTRLTMKVPLHYSGEEESPAVKVENCLVNHVLTELSISCLPKDLPEFIDINLGGLKKGTSLHVKDITLPKGVKFVAKGGQDNPVLVSVSAVSEEAEADAAAAAAAAVPVDPKAAKAAAAKEAKAGAKPPAKK.

The protein belongs to the bacterial ribosomal protein bL25 family. CTC subfamily. Part of the 50S ribosomal subunit; part of the 5S rRNA/L5/L18/L25 subcomplex. Contacts the 5S rRNA. Binds to the 5S rRNA independently of L5 and L18.

In terms of biological role, this is one of the proteins that binds to the 5S RNA in the ribosome where it forms part of the central protuberance. The chain is Large ribosomal subunit protein bL25 from Polaromonas sp. (strain JS666 / ATCC BAA-500).